A 161-amino-acid polypeptide reads, in one-letter code: Transcriptional regulator MraZ (161 aa).

SpoVT-AbrB domains follow at residues 7 to 55 and 84 to 127; these read RYTN…GPAF and SAEL…EPGA.

The protein belongs to the MraZ family. As to quaternary structure, forms oligomers.

It is found in the cytoplasm. It localises to the nucleoid. In Parvibaculum lavamentivorans (strain DS-1 / DSM 13023 / NCIMB 13966), this protein is Transcriptional regulator MraZ.